The primary structure comprises 151 residues: Multiprotein-bridging factor 1 (151 aa).

Disordered regions lie at residues 1–29 (MSDW…ARSQ) and 78–98 (DPNV…SQKD). Residues 41–119 (VVSVDKKYGS…VNDYEAARAI (79 aa)) form an essential for TBP-binding region. One can recognise an HTH cro/C1-type domain in the interval 85 to 139 (ISRARTDKKMSQKDLATKINEKPTVVNDYEAARAIPNQQVLSKLERALGVKLRGN). A compositionally biased stretch (basic and acidic residues) spans 88-98 (ARTDKKMSQKD). Residues 96 to 115 (QKDLATKINEKPTVVNDYEA) constitute a DNA-binding region (H-T-H motif). A Phosphoserine modification is found at serine 143.

This sequence belongs to the MBF1 family. In terms of assembly, interacts with TBP and the transcription factor GCN4. Interacts with RPS3/us3.

It localises to the cytoplasm. It is found in the nucleus. Transcriptional coactivator that stimulates GCN4-dependent transcriptional activity by bridging the DNA-binding region of GCN4 and TBP (SPT15), thereby recruiting TBP to GCN4-bound promoters. Involved in induction of the ribosome quality control (RQC) pathway; a pathway that degrades nascent peptide chains during problematic translation. Required to prevent stalled ribosomes from frameshifting. In Saccharomyces cerevisiae (strain ATCC 204508 / S288c) (Baker's yeast), this protein is Multiprotein-bridging factor 1 (MBF1).